Here is a 538-residue protein sequence, read N- to C-terminus: Calcium-dependent protein kinase 3 (538 aa).

The disordered stretch occupies residues 23-70; that stretch reads PKKSIERIKKKKDSNKSIKSQHKFEGSKISNKNNELKDVKSKDPKNYE. Over residues 56-68 the composition is skewed to basic and acidic residues; it reads NELKDVKSKDPKN. A Protein kinase domain is found at 112-367; the sequence is NLSEEPLGKG…ASEALKHPWF (256 aa). ATP contacts are provided by residues 118–126 and Lys-141; that span reads LGKGTYGCV. Residue Asp-232 is the Proton acceptor of the active site. The J domain autoinhibitory motif motif lies at 387 to 395; the sequence is NFKNYALLL. Positions 387 to 422 are j domain; the sequence is NFKNYALLLKLQKLAMTIIAQQSNDYDLQQLKAVFL. Positions 396-405 match the J domain EF-hand interaction motif motif; that stretch reads KLQKLAMTII. 3 consecutive EF-hand domains span residues 412–447, 450–481, and 482–517; these read YDLQ…SGLK, QNFD…DRKH, and LSKK…VILF. Positions 460, 462, 464, 466, 471, 495, 497, 499, 501, and 506 each coordinate Ca(2+).

The protein belongs to the protein kinase superfamily. Ser/Thr protein kinase family. CDPK subfamily. It depends on Mg(2+) as a cofactor.

The protein localises to the cytoplasm. The catalysed reaction is L-seryl-[protein] + ATP = O-phospho-L-seryl-[protein] + ADP + H(+). The enzyme catalyses L-threonyl-[protein] + ATP = O-phospho-L-threonyl-[protein] + ADP + H(+). Activated by calcium. Upon calcium binding to the EF-hand domain 2, the C-terminus of the junction domain (J domain) undergoes a conformational change which results in the dissociation of the pseudo-substrate inhibitory motif from the catalytic domain. This, in turn, may facilitate the autophosphorylation of the activation loop at Thr-273, which leads to the kinase activation. Its function is as follows. Calcium-dependent protein kinase which acts as a sensor and effector of intracellular Ca(2+) levels probably in part downstream of cGMP-activated PKG kinase. In the mosquito midgut, regulates the gliding motility of the ookinete which is essential for the ookinete to invade the midgut epithelium. However, another study showed that while required for ookinete invasion of the midgut epithelium, is not required for ookinete gliding motility. The chain is Calcium-dependent protein kinase 3 from Plasmodium yoelii yoelii.